Consider the following 250-residue polypeptide: Homeobox protein DLL-1 (250 aa).

Disordered stretches follow at residues 40–66 and 84–106; these read YPSL…SGSN and SPYL…PDQQ. Positions 84-98 are enriched in polar residues; that stretch reads SPYLQSCNSNTTTQS. The homeobox DNA-binding region spans 125 to 184; the sequence is IRKPRTIYSSLQLQALNHRFQQTQYLALPERAELAASLGVTQTQVKIWFQNKRSKYKKLI.

This sequence belongs to the distal-less homeobox family.

It localises to the nucleus. This Xenopus laevis (African clawed frog) protein is Homeobox protein DLL-1 (dll1).